The following is a 741-amino-acid chain: Catalase-peroxidase (741 aa).

Residues 1 to 23 (MLKKIVTALGMSGMLLASSNAIA) form the signal peptide. Residues 102 to 223 (WHDAGTYRIY…YAATQMGLIY (122 aa)) constitute a cross-link (tryptophyl-tyrosyl-methioninium (Trp-Tyr) (with M-249)). H103 functions as the Proton acceptor in the catalytic mechanism. Positions 223–249 (YVNPEGPDGKPDIKGAASEIRQAFRAM) form a cross-link, tryptophyl-tyrosyl-methioninium (Tyr-Met) (with W-102). H264 contacts heme b.

This sequence belongs to the peroxidase family. Peroxidase/catalase subfamily. As to quaternary structure, homodimer or homotetramer. Heme b is required as a cofactor. In terms of processing, formation of the three residue Trp-Tyr-Met cross-link is important for the catalase, but not the peroxidase activity of the enzyme.

The catalysed reaction is H2O2 + AH2 = A + 2 H2O. It catalyses the reaction 2 H2O2 = O2 + 2 H2O. Its function is as follows. Bifunctional enzyme with both catalase and broad-spectrum peroxidase activity. This Francisella tularensis subsp. tularensis (strain WY96-3418) protein is Catalase-peroxidase.